The primary structure comprises 100 residues: Small ribosomal subunit protein uS14c (100 aa).

Positions 1–31 are disordered; sequence MARKSLIQREKKRQKLEQKYHSIRRSSKKEI.

Belongs to the universal ribosomal protein uS14 family. In terms of assembly, part of the 30S ribosomal subunit.

Its subcellular location is the plastid. The protein resides in the chloroplast. Its function is as follows. Binds 16S rRNA, required for the assembly of 30S particles. In Solanum bulbocastanum (Wild potato), this protein is Small ribosomal subunit protein uS14c.